Here is a 509-residue protein sequence, read N- to C-terminus: Maturase K (509 aa).

The protein belongs to the intron maturase 2 family. MatK subfamily.

It is found in the plastid. Its subcellular location is the chloroplast. Its function is as follows. Usually encoded in the trnK tRNA gene intron. Probably assists in splicing its own and other chloroplast group II introns. This is Maturase K from Austrocylindropuntia vestita (Cactus).